We begin with the raw amino-acid sequence, 910 residues long: MAEGFVSFGLEKLWDLLSRESERLQGIDEQLDGLKRQLRSLQSLLKDADAKKHGSDRVRNFLEDVKDLVFDAEDIIESYVLNKLRGEGKGVKKHVRRLARFLTDRHKVASDIEGITKRISEVIGEMQSFGIQQIIDGGRSLSLQERQRVQREIRQTYPDSSESDLVGVEQSVTELVCHLVENDVHQVVSIAGMGGIGKTTLARQVFHHDLVRRHFDGFAWVCVSQQFTQKHVWQRILQELQPHDGEILQMDEYTIQGKLFQLLETGRYLVVLDDVWKKEDWDRIKAVFPRKRGWKMLLTSRNEGVGIHADPTCLTFRASILNPEESWKLCERIVFPRRDETEVRLDEEMEAMGKEMVTHCGGLPLAVKALGGLLANKHTVPEWKRVSDNIGSQIVGGSCLDDNSLNSVYRILSLSYEDLPTHLKHCFLHLAHYPEDSKIYTQDLFNYWAAEGIYDGSTIQDSGEYYLEELVRRNLVIADNRYLISEFKIKNCQMHDMMREVCLSKAKEENFLQIIKDPTCTSTINAQSPSRSRRLSIHSGKAFHILGHKRNAKVRSLIVSRFEEDFWIRSASVFHNLTLLRVLDLSWVKFEGGKLPCSIGGLIHLRYLRLYGAVVSHLPSTMRNLKLLLYLNLSVHNEDLIHVPNVLKEMIELRYLSIPVKMDDKTKLELGDLVNLEYLYGFSTQHTSVTDLLRMTKLRNLTVSLSERYNFKTLSSSLRELRNLETLYVLFSRKTYMVDHMGEFVLDHFIHLKELGLVVRMSKIPDQHQFPPHLVHIFLFYCGMEEDPMPILEKLHHLKSVQLRYKAFVGRRMVCSKDGFTQLCALDISKQSELEDWIVEEGSMPCLRTLTIHDCEKLKELPDGLKYITSLKELKIEGMKREWKEKLVPGGEDYYKVQHIPDVQFINCDQ.

Residues 15 to 57 (DLLSRESERLQGIDEQLDGLKRQLRSLQSLLKDADAKKHGSDR) are a coiled coil. The 314-residue stretch at 146–459 (RQRVQREIRQ…AEGIYDGSTI (314 aa)) folds into the NB-ARC domain. 192–199 (GMGGIGKT) contributes to the ATP binding site.

It belongs to the disease resistance NB-LRR family. RPP8/HRT subfamily.

Disease resistance protein. Resistance proteins guard the plant against pathogens that contain an appropriate avirulence protein via an indirect interaction with this avirulence protein. That triggers a defense system including the hypersensitive response, which restricts the pathogen growth. In contrast to RPP8, it does not specifically recognize the Emco5 avirulence protein from Hyaloperonospora parasitica. This Arabidopsis thaliana (Mouse-ear cress) protein is Disease resistance protein RPH8A (RPH8A).